Consider the following 651-residue polypeptide: Threonine--tRNA ligase (651 aa).

Positions 1 to 61 constitute a TGS domain; the sequence is MPTIQLPDGS…DKDVSLRIIT (61 aa). Residues 242-533 are catalytic; the sequence is DHRLLAKKMD…LLEESAGKLP (292 aa). Residues Cys333, His384, and His510 each coordinate Zn(2+). The tract at residues 631–651 is disordered; sequence ISQRSRKSPAPSPLFPVGGES.

The protein belongs to the class-II aminoacyl-tRNA synthetase family. As to quaternary structure, homodimer. Requires Zn(2+) as cofactor.

Its subcellular location is the cytoplasm. The enzyme catalyses tRNA(Thr) + L-threonine + ATP = L-threonyl-tRNA(Thr) + AMP + diphosphate + H(+). In terms of biological role, catalyzes the attachment of threonine to tRNA(Thr) in a two-step reaction: L-threonine is first activated by ATP to form Thr-AMP and then transferred to the acceptor end of tRNA(Thr). Also edits incorrectly charged L-seryl-tRNA(Thr). The sequence is that of Threonine--tRNA ligase from Coxiella burnetii (strain RSA 493 / Nine Mile phase I).